A 591-amino-acid chain; its full sequence is Reduced folate transporter (591 aa).

M1 carries the post-translational modification N-acetylmethionine. The Cytoplasmic portion of the chain corresponds to 1 to 29; the sequence is MVPSSPAVEKQVPVEPGPDPELRSWRHLV. S5 carries the phosphoserine modification. A helical transmembrane segment spans residues 30 to 50; that stretch reads CYLCFYGFMAQIRPGESFITP. 2 residues coordinate folate: I48 and T49. Residues 51 to 64 lie on the Extracellular side of the membrane; that stretch reads YLLGPDKNFTREQV. N58 carries N-linked (GlcNAc...) asparagine glycosylation. The chain crosses the membrane as a helical span at residues 65–87; sequence TNEITPVLSYSYLAVLVPVFLLT. Topologically, residues 88–91 are cytoplasmic; the sequence is DYLR. The helical transmembrane segment at 92–112 threads the bilayer; the sequence is YTPVLLLQGLSFVSVWLLLLL. At 113-116 the chain is on the extracellular side; that stretch reads GHSV. A helical membrane pass occupies residues 117–139; sequence AHMQLMELFYSVTMAARIAYSSY. E123 and R133 together coordinate folate. Residues R133, I134, S137, Y149, and R157 each coordinate 2',3'-cGAMP. The Cytoplasmic portion of the chain corresponds to 140-153; that stretch reads IFSLVRPARYQRVA. Residues 154 to 178 traverse the membrane as a helical segment; sequence GYSRAAVLLGVFTSSVLGQLLVTVG. V164 contacts folate. The Extracellular segment spans residues 179 to 183; it reads RVSFS. A helical membrane pass occupies residues 184–202; it reads TLNYISLAFLTFSVVLALF. At 203 to 266 the chain is on the cytoplasmic side; that stretch reads LKRPKRSLFF…ELGDSLRRPQ (64 aa). Position 225 is a phosphoserine (S225). Residues 267-292 form a helical membrane-spanning segment; it reads LRLWSLWWVFNSAGYYLVVYYVHILW. Positions 281, 282, and 286 each coordinate folate. Y282 contacts 2',3'-cGAMP. At 293–304 the chain is on the extracellular side; the sequence is NEVDPTTNSARV. A helical membrane pass occupies residues 305–327; sequence YNGAADAASTLLGAITSFAAGFV. Residue S321 participates in 2',3'-cGAMP binding. The Cytoplasmic segment spans residues 328 to 333; that stretch reads KIRWAR. The chain crosses the membrane as a helical span at residues 334 to 354; that stretch reads WSKLLIAGVTATQAGLVFLLA. At 355–360 the chain is on the extracellular side; sequence HTRHPS. Residues 361-384 form a helical membrane-spanning segment; the sequence is SIWLCYAAFVLFRGSYQFLVPIAT. Residues R373 and Q377 each contribute to the folate site. Q377, P381, T384, K393, C396, and F400 together coordinate 2',3'-cGAMP. Residues 385-398 are Cytoplasmic-facing; the sequence is FQIASSLSKELCAL. The chain crosses the membrane as a helical span at residues 399–422; it reads VFGVNTFFATIVKTIITFIVSDVR. The interval 407–419 is required for substrate-binding; sequence ATIVKTIITFIVS. The Extracellular segment spans residues 423–430; sequence GLGLPVRK. The chain crosses the membrane as a helical span at residues 431–455; that stretch reads QFQLYSVYFLILSIIYFLGAMLDGL. Residues 456–591 lie on the Cytoplasmic side of the membrane; it reads RHCQRGHHPR…PSDGVQNVNQ (136 aa). Residues S474, S485, S499, and S503 each carry the phosphoserine modification.

It belongs to the reduced folate carrier (RFC) transporter (TC 2.A.48) family. In terms of tissue distribution, placenta, liver, and to a much smaller extent, in lung.

The protein resides in the cell membrane. Its subcellular location is the apical cell membrane. The protein localises to the basolateral cell membrane. The catalysed reaction is 5-amino-1-(5-phospho-beta-D-ribosyl)imidazole-4-carboxamide(in) + (6S)-5-methyl-5,6,7,8-tetrahydrofolate(out) = 5-amino-1-(5-phospho-beta-D-ribosyl)imidazole-4-carboxamide(out) + (6S)-5-methyl-5,6,7,8-tetrahydrofolate(in). It carries out the reaction 2',3'-cGAMP(out) + 5-amino-1-(5-phospho-beta-D-ribosyl)imidazole-4-carboxamide(in) = 2',3'-cGAMP(in) + 5-amino-1-(5-phospho-beta-D-ribosyl)imidazole-4-carboxamide(out). It catalyses the reaction 3',3'-cGAMP(out) + 5-amino-1-(5-phospho-beta-D-ribosyl)imidazole-4-carboxamide(in) = 3',3'-cGAMP(in) + 5-amino-1-(5-phospho-beta-D-ribosyl)imidazole-4-carboxamide(out). Antiporter that mediates the import of reduced folates or a subset of cyclic dinucleotides, driven by the export of organic anions. Acts as an importer of immunoreactive cyclic dinucleotides, such as cyclic GMP-AMP (2'-3'-cGAMP), an immune messenger produced in response to DNA virus in the cytosol, and its linkage isomer 3'-3'-cGAMP, thus playing a role in triggering larger immune responses. Mechanistically, acts as a secondary active transporter, which exports intracellular organic anions down their concentration gradients to facilitate the uptake of its substrates. Has high affinity for N5-methyltetrahydrofolate, the predominant circulating form of folate. Also mediates the import of antifolate drug methotrexate. 5-amino-4-imidazolecarboxamide riboside (AICAR), when phosphorylated to AICAR monophosphate, can serve as an organic anion for antiporter activity. The protein is Reduced folate transporter of Homo sapiens (Human).